Here is a 135-residue protein sequence, read N- to C-terminus: Ribosome-binding factor A (135 aa).

This sequence belongs to the RbfA family. Monomer. Binds 30S ribosomal subunits, but not 50S ribosomal subunits or 70S ribosomes.

Its subcellular location is the cytoplasm. Functionally, one of several proteins that assist in the late maturation steps of the functional core of the 30S ribosomal subunit. Associates with free 30S ribosomal subunits (but not with 30S subunits that are part of 70S ribosomes or polysomes). Required for efficient processing of 16S rRNA. May interact with the 5'-terminal helix region of 16S rRNA. The polypeptide is Ribosome-binding factor A (Rhizobium meliloti (strain 1021) (Ensifer meliloti)).